The following is a 493-amino-acid chain: Putative BTB/POZ domain-containing protein L35 (493 aa).

In terms of domain architecture, BTB spans 16 to 87 (TDLKLTLVDD…YLVDNKSEVD (72 aa)).

It belongs to the mimivirus BTB/WD family.

In Acanthamoeba polyphaga (Amoeba), this protein is Putative BTB/POZ domain-containing protein L35.